The sequence spans 759 residues: MSNLDNPGIYYQERFFANDGVPDTGRELIAEYRQLITQFRNFIRDFSTGGFGMIYRDQLKRNYFSHEYRLEINLNHLKNFDEDIEMKLRKFPGKVLPALEEAAKIVADEITTPRPKGEEKLHDIQVTLTLDEYPTSLRQVKSAQVSQVVKISGIIVAAAQVRSKATKVTLQCRQCKHTIPDVSIKPGLEGFALPRTCAAPQQGQMQRCPIDPYIMLPDKCECVDYQTLKLQENPEDVPHGEMPRHLQLFTERYLTDKVVPGNRVTIVGVYSIKKLIQKKGGDKSLQGIRTPYLRVLGIHMETSGPGRTNFTTFTPEEERMFKTLAQRKDAYELIAKSIAPSIYGSADIKKSIACLLFGGARKKLPDGITRRGDINVLLLGDPGTAKSQLLKFVEQVSPIGVYTSGKGSSAAGLTASVIRDPQSRSFIMEGGAMVLADGGVVCIDEFDKMREDDRVAIHEAMEQQTISIAKAGITTTLNSRCSVLAAANSVYGRWDESRGDDNIDFMPTILSRFDMIYIVKDTHDVLKDATLAKHVIEVHVNASAAKERDIAGVPKTATTDSDGVMTMFDTDGFLTIEFLKKFVTYARLNCGPRLTPQASEKLVNHYVKMRNPVVNADAFKSGKKAHNSAIPITVRQLEAIVRIAESIAKMELQQFATDKHVEEALRLFRVSTIEAAATGNLAGVEGFTSTADQEALNRIEVQMKKRFAIGTHVSEHLIVQDFVARQHYRESLVKKVIDNLVRRGDLQQKMQRKMLYRVR.

The MCM domain maps to 330–536; sequence AYELIAKSIA…KDATLAKHVI (207 aa). R370 contributes to the ADP binding site. An Arginine finger motif is present at residues 511–514; it reads SRFD.

This sequence belongs to the MCM family. As to quaternary structure, component of the mcm2-7 complex. The complex forms a toroidal hexameric ring with the proposed subunit order mcm2-mcm6-mcm4-mcm7-mcm3-mcm5 (By simililarity).

It is found in the nucleus. Its subcellular location is the cytoplasm. It localises to the cytosol. It carries out the reaction ATP + H2O = ADP + phosphate + H(+). Acts as a component of the MCM2-7 complex (MCM complex) which is the replicative helicase essential for 'once per cell cycle' DNA replication initiation and elongation in eukaryotic cells. Core component of CDC45-MCM-GINS (CMG) helicase, the molecular machine that unwinds template DNA during replication, and around which the replisome is built. The active ATPase sites in the MCM2-7 ring are formed through the interaction surfaces of two neighboring subunits such that a critical structure of a conserved arginine finger motif is provided in trans relative to the ATP-binding site of the Walker A box of the adjacent subunit. The six ATPase active sites, however, are likely to contribute differentially to the complex helicase activity. The polypeptide is DNA replication licensing factor mcm-5 (mcm-5) (Caenorhabditis elegans).